The sequence spans 402 residues: MDKALLLYSGGLDTSVMIKWIQENLSMDVATLTLNVGNSDLVAIEEKARMLGADPVFVHDAKDEFAEKFIAKSIMANGSYEGYPLSTALARPLMAEKAVKYAQKIGAKYIVHGSTGRGNDQVRFEVSIRALDPSMQVLVPVREWNMMRKDEVEYAKTHGIPVKLDGKYSIDENIWGRSVEGPDLEDIGKGVPEDVYEWVVPPWKANAEHTLKIAFDGGIPSEIDGEKMKLADLIVFLNTLAGSSGIGLIDHMENRVVGLKSHEVYECPAATVITHAHRYLESLILNRNEAEVKMNMDWQFAKFVYGGLWHDPVMNAVNAAEAEFNRDISGEIKIRMSHGIMYIEGAWGNSFLYSKDLINYSSMAFDQRASKGFIDIYGNATVHSHNRNPKMVKEVQGSSVEF.

7–15 contacts ATP; the sequence is LYSGGLDTS. Position 83 (Tyr-83) interacts with L-citrulline. An ATP-binding site is contributed by Gly-113. 3 residues coordinate L-aspartate: Thr-115, Asn-119, and Asp-120. Asn-119 provides a ligand contact to L-citrulline. L-citrulline is bound by residues Arg-123, Ser-169, Ser-178, Glu-253, and Tyr-265.

The protein belongs to the argininosuccinate synthase family. Type 1 subfamily. Homotetramer.

Its subcellular location is the cytoplasm. The enzyme catalyses L-citrulline + L-aspartate + ATP = 2-(N(omega)-L-arginino)succinate + AMP + diphosphate + H(+). It functions in the pathway amino-acid biosynthesis; L-arginine biosynthesis; L-arginine from L-ornithine and carbamoyl phosphate: step 2/3. This is Argininosuccinate synthase from Thermoplasma acidophilum (strain ATCC 25905 / DSM 1728 / JCM 9062 / NBRC 15155 / AMRC-C165).